A 314-amino-acid polypeptide reads, in one-letter code: MRGKRIFIGSSSEELRLAEQAKKILEKNTNYQVTIWNENMWDKAVFRLNNSYLNDLIRATLHFDFGILIGTKDDKVIFRGSEEIQPRDNVLFELGLFIGRLGLNNCAFLVDEEIKILSDVKGISLARFKEKDSDSFNNAVLSIRESFDRQNDSDINFFPSSTLAAVYYENFIKPTCSHIINNGGLLDKNGYIYKKCTIKIIIPKKLTSDVNSQFQRIKAKIETKELSFEYLGRPRNINVEIIAEDGEVMIIDFPTILSGINYAISNLLPQDFNSMSVDYEAILSRELERFVYTLKKIALRDGFDDLIKIVDEDN.

The region spanning 5-129 (RIFIGSSSEE…VKGISLARFK (125 aa)) is the TIR domain. The tract at residues 160 to 314 (SSTLAAVYYE…DLIKIVDEDN (155 aa)) is STING domain. 3',3'-c-di-GMP-binding residues include Phe-171, Pro-234, and Asp-252.

The protein in the C-terminal section; belongs to the bacterial STING family. As to quaternary structure, homodimer. Forms homodimers; in the presence of c-di-GMP forms filaments with an ordered array of parallel-stacked subunits.

The enzyme catalyses NAD(+) + H2O = ADP-D-ribose + nicotinamide + H(+). With respect to regulation, NAD(+) hydrolase activity is strongly stimulated by c-di-GMP, weakly by 3'3'-cGAMP, very weakly by c-di-AMP but not at all by 2'3'-cGAMP. Self-association of TIR domains is required for NADase activity. In terms of biological role, effector protein of a CBASS antiviral system with NAD(+) hydrolase activity. CBASS (cyclic oligonucleotide-based antiphage signaling system) provides immunity against bacteriophage. The CD-NTase protein synthesizes cyclic nucleotides in response to infection; these serve as specific second messenger signals. The signals activate a diverse range of effectors, leading to bacterial cell death and thus abortive phage infection. A type I-(GG) CBASS system. Binds c-di-GMP (synthesized by the cognate CdnE encoded upstream in the same operon), and about 10-fold less well 3'3'-cGAMP, but not c-di-AMP, 2'-3'-cGAMP or cUMP-AMP (tested without the N-terminal TIR domain). Upon activation by c-di-GMP forms filaments which hydrolyze NAD(+); filament formation is required for enzyme activation. The sequence is that of CD-NTase-associated protein 12 from Capnocytophaga granulosa (strain ATCC 51502 / DSM 11449 / JCM 8566 / LMG 16022 / NCTC 12948 / B0611).